A 137-amino-acid polypeptide reads, in one-letter code: Endoribonuclease YbeY (137 aa).

Residues His105, His109, and Asp115 each contribute to the Zn(2+) site.

The protein belongs to the endoribonuclease YbeY family. Zn(2+) is required as a cofactor.

The protein resides in the cytoplasm. Single strand-specific metallo-endoribonuclease involved in late-stage 70S ribosome quality control and in maturation of the 3' terminus of the 16S rRNA. This chain is Endoribonuclease YbeY, found in Chlorobaculum tepidum (strain ATCC 49652 / DSM 12025 / NBRC 103806 / TLS) (Chlorobium tepidum).